The chain runs to 906 residues: Nuclear factor NF-kappa-B p100 subunit (906 aa).

The 190-residue stretch at 34-223 (AVGPYLVIIE…DPIHDSKSPG (190 aa)) folds into the RHD domain. The short motif at 336–340 (RNRKK) is the Nuclear localization signal element. The GRR stretch occupies residues 345 to 374 (FPQHFGGGSHMGGAGGAGGFGAGGGGNLSF). 6 ANK repeats span residues 472-501 (NGDT…SIPS), 511-540 (LQQT…NPTL), 544-573 (YGNS…SATP), 582-611 (QGLL…DVNG), 616-646 (GGRT…NVNS), and 650-679 (AGNT…DVQR). 2 disordered regions span residues 677–734 (VQRE…GPRQ) and 857–906 (EPLE…QQVH). A compositionally biased stretch (low complexity) spans 684–695 (PVSPSSVRVPSS). Over residues 697 to 708 (TDGDPEEQEQEQ) the composition is skewed to acidic residues. A Death domain is found at 771 to 857 (RNHLLSLDTD…GAVRMLRKPE (87 aa)).

As to quaternary structure, component of the NF-kappa-B RelB-p52 complex. Post-translationally, while translation occurs, the particular unfolded structure after the GRR repeat promotes the generation of p52 making it an acceptable substrate for the proteasome. This process is known as cotranslational processing. The processed form is active and the unprocessed form acts as an inhibitor (I kappa B-like), being able to form cytosolic complexes with NF-kappa B, trapping it in the cytoplasm. Complete folding of the region downstream of the GRR repeat precludes processing. In terms of processing, constitutive processing is tightly suppressed by its C-terminal processing inhibitory domain, named PID, which contains the death domain.

It is found in the nucleus. Its subcellular location is the cytoplasm. Its function is as follows. NF-kappa-B is a pleiotropic transcription factor present in almost all cell types and is the endpoint of a series of signal transduction events that are initiated by a vast array of stimuli related to many biological processes such as inflammation, immunity, differentiation, cell growth, tumorigenesis and apoptosis. NF-kappa-B is a homo- or heterodimeric complex formed by the Rel-like domain-containing proteins RELA/p65, RELB, NFKB1/p105, NFKB1/p50, REL and NFKB2/p52. The dimers bind at kappa-B sites in the DNA of their target genes and the individual dimers have distinct preferences for different kappa-B sites that they can bind with distinguishable affinity and specificity. Different dimer combinations act as transcriptional activators or repressors, respectively. NF-kappa-B is controlled by various mechanisms of post-translational modification and subcellular compartmentalization as well as by interactions with other cofactors or corepressors. NF-kappa-B complexes are held in the cytoplasm in an inactive state complexed with members of the NF-kappa-B inhibitor (I-kappa-B) family. In a conventional activation pathway, I-kappa-B is phosphorylated by I-kappa-B kinases (IKKs) in response to different activators, subsequently degraded thus liberating the active NF-kappa-B complex which translocates to the nucleus. In a non-canonical activation pathway, the MAP3K14-activated CHUK/IKKA homodimer phosphorylates NFKB2/p100 associated with RelB, inducing its proteolytic processing to NFKB2/p52 and the formation of NF-kappa-B RelB-p52 complexes. The NF-kappa-B heterodimeric RelB-p52 complex is a transcriptional activator. NFKB2 appears to have dual functions such as cytoplasmic retention of attached NF-kappa-B proteins by p100 and generation of p52 by a cotranslational processing. The proteasome-mediated process ensures the production of both p52 and p100 and preserves their independent function. p52 binds to the kappa-B consensus sequence 5'-GGRNNYYCC-3', located in the enhancer region of genes involved in immune response and acute phase reactions. In concert with RELB, may play a role in the regulation of the circadian clock. This is Nuclear factor NF-kappa-B p100 subunit (NFKB2) from Gallus gallus (Chicken).